A 120-amino-acid polypeptide reads, in one-letter code: Cell division protein FtsL (120 aa).

Residues 1 to 36 (MSNLAVKYKQQAQEEVQIQTPPQQMVQPKAKAKITR) are Cytoplasmic-facing. A helical transmembrane segment spans residues 37–57 (IEKLLYVAFIGFLLYACVAFI). Topologically, residues 58–120 (GNKAGLYQVN…INANNVKGLK (63 aa)) are extracellular.

It belongs to the FtsL family.

It localises to the cell membrane. Essential cell division protein. This chain is Cell division protein FtsL, found in Bacillus anthracis.